The following is a 106-amino-acid chain: CLAVATA3/ESR (CLE)-related protein 21 (106 aa).

The N-terminal stretch at 1–31 (MLILSSRYAMKRDVLIIVIFTVLVLIIISRS) is a signal peptide. N47 is a glycosylation site (N-linked (GlcNAc...) asparagine). Over residues 72–82 (KVRRRSSRFRR) the composition is skewed to basic residues. Positions 72-106 (KVRRRSSRFRRKTDGDEEEEEKRSIPTGPNPLHNK) are disordered. Hydroxyproline is present on residues P97 and P100. P100 carries O-linked (Ara...) hydroxyproline glycosylation.

This sequence belongs to the CLV3/ESR signal peptide family. Post-translationally, the O-glycosylation (arabinosylation) of the hydroxyproline Pro-100 enhances binding affinity of the CLE21p peptide for its receptor. Mostly expressed in leaves and apex, and, to a lower extent, in seedlings, flowers, stems and siliques.

It localises to the secreted. Its subcellular location is the extracellular space. Functionally, extracellular signal peptide that regulates cell fate. Represses root apical meristem maintenance. Regulates the transition of protophloem cells from proliferation to differentiation, thus impinging on postembryonic growth capacity of the root meristem; this signaling pathway requires CRN and CLV2. This Arabidopsis thaliana (Mouse-ear cress) protein is CLAVATA3/ESR (CLE)-related protein 21.